The sequence spans 95 residues: Aspartyl/glutamyl-tRNA(Asn/Gln) amidotransferase subunit C (95 aa).

This sequence belongs to the GatC family. In terms of assembly, heterotrimer of A, B and C subunits.

It catalyses the reaction L-glutamyl-tRNA(Gln) + L-glutamine + ATP + H2O = L-glutaminyl-tRNA(Gln) + L-glutamate + ADP + phosphate + H(+). It carries out the reaction L-aspartyl-tRNA(Asn) + L-glutamine + ATP + H2O = L-asparaginyl-tRNA(Asn) + L-glutamate + ADP + phosphate + 2 H(+). Allows the formation of correctly charged Asn-tRNA(Asn) or Gln-tRNA(Gln) through the transamidation of misacylated Asp-tRNA(Asn) or Glu-tRNA(Gln) in organisms which lack either or both of asparaginyl-tRNA or glutaminyl-tRNA synthetases. The reaction takes place in the presence of glutamine and ATP through an activated phospho-Asp-tRNA(Asn) or phospho-Glu-tRNA(Gln). The protein is Aspartyl/glutamyl-tRNA(Asn/Gln) amidotransferase subunit C of Ruthia magnifica subsp. Calyptogena magnifica.